The primary structure comprises 154 residues: Crossover junction endodeoxyribonuclease RuvC (154 aa).

Active-site residues include D7, E67, and D139. The Mg(2+) site is built by D7, E67, and D139.

This sequence belongs to the RuvC family. In terms of assembly, homodimer which binds Holliday junction (HJ) DNA. The HJ becomes 2-fold symmetrical on binding to RuvC with unstacked arms; it has a different conformation from HJ DNA in complex with RuvA. In the full resolvosome a probable DNA-RuvA(4)-RuvB(12)-RuvC(2) complex forms which resolves the HJ. The cofactor is Mg(2+).

It localises to the cytoplasm. The enzyme catalyses Endonucleolytic cleavage at a junction such as a reciprocal single-stranded crossover between two homologous DNA duplexes (Holliday junction).. Functionally, the RuvA-RuvB-RuvC complex processes Holliday junction (HJ) DNA during genetic recombination and DNA repair. Endonuclease that resolves HJ intermediates. Cleaves cruciform DNA by making single-stranded nicks across the HJ at symmetrical positions within the homologous arms, yielding a 5'-phosphate and a 3'-hydroxyl group; requires a central core of homology in the junction. The consensus cleavage sequence is 5'-(A/T)TT(C/G)-3'. Cleavage occurs on the 3'-side of the TT dinucleotide at the point of strand exchange. HJ branch migration catalyzed by RuvA-RuvB allows RuvC to scan DNA until it finds its consensus sequence, where it cleaves and resolves the cruciform DNA. The protein is Crossover junction endodeoxyribonuclease RuvC of Prochlorococcus marinus (strain MIT 9303).